The sequence spans 156 residues: MSDSQMVIDLDVQVAVEGFELPSQAELELWVKTALRDTMSEAELTIRIVDVEESQELNMTYRGKDKPTNVLSFPFEAPPGIELPLLGDLVICAAVVEQEAIDQNKPLLAHWAHMVVHGCLHLLGYDHIEDVEAEEMESLETQLIESLGYINPYKEQ.

Zn(2+) is bound by residues His117, His121, and His127.

It belongs to the endoribonuclease YbeY family. Zn(2+) serves as cofactor.

The protein localises to the cytoplasm. Its function is as follows. Single strand-specific metallo-endoribonuclease involved in late-stage 70S ribosome quality control and in maturation of the 3' terminus of the 16S rRNA. The chain is Endoribonuclease YbeY from Shewanella pealeana (strain ATCC 700345 / ANG-SQ1).